The primary structure comprises 360 residues: Ribosomal RNA large subunit methyltransferase M (360 aa).

Residues serine 187, 220-223 (CPGG), aspartate 239, aspartate 259, and aspartate 276 each bind S-adenosyl-L-methionine. Lysine 305 serves as the catalytic Proton acceptor.

The protein belongs to the class I-like SAM-binding methyltransferase superfamily. RNA methyltransferase RlmE family. RlmM subfamily. Monomer.

The protein localises to the cytoplasm. The enzyme catalyses cytidine(2498) in 23S rRNA + S-adenosyl-L-methionine = 2'-O-methylcytidine(2498) in 23S rRNA + S-adenosyl-L-homocysteine + H(+). In terms of biological role, catalyzes the 2'-O-methylation at nucleotide C2498 in 23S rRNA. This is Ribosomal RNA large subunit methyltransferase M from Shewanella pealeana (strain ATCC 700345 / ANG-SQ1).